Here is a 171-residue protein sequence, read N- to C-terminus: Putative defense protein (171 aa).

An N-terminal signal peptide occupies residues 1 to 23; sequence MKVYACLCAAVVMLVMTSRVSEA. The Reelin domain maps to 24–171; sequence RSTGAPLSAC…VQSAPIKIVS (148 aa). Cysteines 33 and 110 form a disulfide. The N-linked (GlcNAc...) asparagine glycan is linked to N41.

This sequence belongs to the insect defense protein family.

Its subcellular location is the secreted. May have antimicrobial activity. This chain is Putative defense protein, found in Bombyx mori (Silk moth).